Consider the following 388-residue polypeptide: Succinate--CoA ligase [ADP-forming] subunit beta (388 aa).

In terms of domain architecture, ATP-grasp spans 9-244; it reads KEILRKYNVP…LDEEDPAEIE (236 aa). ATP-binding positions include K46, 53-55, E99, A102, and E107; that span reads GRG. Mg(2+) contacts are provided by N199 and D213. Substrate-binding positions include N264 and 321–323; that span reads GIM.

Belongs to the succinate/malate CoA ligase beta subunit family. Heterotetramer of two alpha and two beta subunits. It depends on Mg(2+) as a cofactor.

It catalyses the reaction succinate + ATP + CoA = succinyl-CoA + ADP + phosphate. It carries out the reaction GTP + succinate + CoA = succinyl-CoA + GDP + phosphate. The protein operates within carbohydrate metabolism; tricarboxylic acid cycle; succinate from succinyl-CoA (ligase route): step 1/1. Functionally, succinyl-CoA synthetase functions in the citric acid cycle (TCA), coupling the hydrolysis of succinyl-CoA to the synthesis of either ATP or GTP and thus represents the only step of substrate-level phosphorylation in the TCA. The beta subunit provides nucleotide specificity of the enzyme and binds the substrate succinate, while the binding sites for coenzyme A and phosphate are found in the alpha subunit. This Ralstonia pickettii (strain 12J) protein is Succinate--CoA ligase [ADP-forming] subunit beta.